The primary structure comprises 337 residues: 1-aminocyclopropane-1-carboxylate deaminase (337 aa).

Lys50 carries the post-translational modification N6-(pyridoxal phosphate)lysine. Ser77 (nucleophile) is an active-site residue.

This sequence belongs to the ACC deaminase/D-cysteine desulfhydrase family. Homotrimer. The cofactor is pyridoxal 5'-phosphate.

The catalysed reaction is 1-aminocyclopropane-1-carboxylate + H2O = 2-oxobutanoate + NH4(+). In terms of biological role, catalyzes a cyclopropane ring-opening reaction, the irreversible conversion of 1-aminocyclopropane-1-carboxylate (ACC) to ammonia and alpha-ketobutyrate. Allows growth on ACC as a nitrogen source. The polypeptide is 1-aminocyclopropane-1-carboxylate deaminase (Rhizobium rhizogenes (strain K84 / ATCC BAA-868) (Agrobacterium radiobacter)).